The primary structure comprises 539 residues: Chaperonin GroEL 2 (539 aa).

ATP contacts are provided by residues 30 to 33, K51, 87 to 91, G415, 480 to 482, and D496; these read TLGP, DGTTT, and NAA.

It belongs to the chaperonin (HSP60) family. In terms of assembly, forms a cylinder of 14 subunits composed of two heptameric rings stacked back-to-back. Interacts with the co-chaperonin GroES.

Its subcellular location is the cytoplasm. It carries out the reaction ATP + H2O + a folded polypeptide = ADP + phosphate + an unfolded polypeptide.. Together with its co-chaperonin GroES, plays an essential role in assisting protein folding. The GroEL-GroES system forms a nano-cage that allows encapsulation of the non-native substrate proteins and provides a physical environment optimized to promote and accelerate protein folding. This Sphingopyxis alaskensis (strain DSM 13593 / LMG 18877 / RB2256) (Sphingomonas alaskensis) protein is Chaperonin GroEL 2.